The primary structure comprises 502 residues: Glutamate--tRNA ligase (502 aa).

The 'HIGH' region signature appears at 12–22; sequence PSPTGYLHVGG. The 'KMSKS' region signature appears at 259–263; that stretch reads KLSKR. K262 contributes to the ATP binding site.

It belongs to the class-I aminoacyl-tRNA synthetase family. Glutamate--tRNA ligase type 1 subfamily. As to quaternary structure, monomer.

The protein resides in the cytoplasm. The enzyme catalyses tRNA(Glu) + L-glutamate + ATP = L-glutamyl-tRNA(Glu) + AMP + diphosphate. Catalyzes the attachment of glutamate to tRNA(Glu) in a two-step reaction: glutamate is first activated by ATP to form Glu-AMP and then transferred to the acceptor end of tRNA(Glu). The protein is Glutamate--tRNA ligase of Pelodictyon phaeoclathratiforme (strain DSM 5477 / BU-1).